The primary structure comprises 970 residues: Disks large 1 tumor suppressor protein (970 aa).

Residues 4 to 64 (KKQEAHRALE…FYELTLLDDS (61 aa)) enclose the L27 domain. Positions 161 to 209 (TENAKEPTVEQQQKQQQAQQRSSRSPQQQNPQQQQGSKSRSGSQTVNGD) are disordered. Over residues 171-204 (QQQKQQQAQQRSSRSPQQQNPQQQQGSKSRSGSQ) the composition is skewed to low complexity. 2 PDZ domains span residues 216–303 (DIQL…KRKR) and 330–421 (EIDL…GKTQ). Positions 424–477 (TTSASGGGGGGLSSGQQLSQSQSQLATSQSQSQVHQQQHATPMVNSQSTEPGSR) are disordered. A compositionally biased stretch (low complexity) spans 437-462 (SGQQLSQSQSQLATSQSQSQVHQQQH). The segment covering 466–477 (MVNSQSTEPGSR) has biased composition (polar residues). The residue at position 496 (Ser496) is a Phosphoserine. Residues 506-587 (TITIQKGPQG…VVTLLAQYRP (82 aa)) enclose the PDZ 3 domain. Residues 620–690 (KRSLYVRALF…PSKRRWERKM (71 aa)) form the SH3 domain. Phosphothreonine is present on Thr714. The region spanning 780–955 (TRPVIILGPL…IYSKVKSMIW (176 aa)) is the Guanylate kinase-like domain.

It belongs to the MAGUK family. In terms of tissue distribution, during the cellular blastoderm stage, isoform B, isoform F, isoform H, isoform I and isoform L expression is localized to the cell borders. From stage 11 onwards, expression is found predominantly in the developing nervous system: axon bundles in the ventral cord and the brain. Stage 14 and 15 embryos exhibit expression in the developing body wall muscle. Expression in neuropil regions of the CNS and at NMJs persists through to larval development. Other isoforms show expression in embryonic epithelial cells. In larvae, expression is seen as a belt around salivary glands, imaginal disks and proventriculus. Expressed in adult reproductive tissues. In epithelia, coexpressed with scrib throughout development.

Its subcellular location is the cytoplasm. The protein localises to the cell membrane. It is found in the basolateral cell membrane. It localises to the cytoskeleton. The protein resides in the cell junction. Its subcellular location is the septate junction. During embryonic development, some isoforms are essential for proper neuronal differentiation and organization. Required for cell polarity; maintenance of apicobasal polarity. Plays a critical role at septate junctions in cellular growth control during larval development. The presence of a guanylate kinase domain suggests involvement in cellular adhesion as well as signal transduction to control cellular proliferation. The chain is Disks large 1 tumor suppressor protein (dlg1) from Drosophila melanogaster (Fruit fly).